A 785-amino-acid polypeptide reads, in one-letter code: Sexual differentiation process protein isp4 (785 aa).

Positions 1 to 28 (MIGSINESPIEEHMNDSPSTKEKADSVD) are disordered. The segment covering 10–26 (IEEHMNDSPSTKEKADS) has biased composition (basic and acidic residues). The next 16 membrane-spanning stretches (helical) occupy residues 94–114 (MWTI…FFSL), 121–141 (LSVL…DLIF), 167–187 (LIVV…IILA), 196–216 (FGFG…YGLA), 264–284 (FFLY…YIFQ), 339–359 (LMNI…ALNF), 413–433 (ALAF…VILY), 461–481 (VPFY…MGTI), 490–510 (WWVI…IGIV), 512–532 (AITN…GYMY), 537–557 (LAMM…LAFA), 572–592 (IMFY…IGVL), 611–631 (YTCP…VIGP), 642–662 (TGLQ…WALW), 683–703 (GYIP…GLFF), and 732–752 (LSVI…PDWW).

Belongs to the oligopeptide OPT transporter family.

It localises to the endoplasmic reticulum membrane. In Schizosaccharomyces pombe (strain 972 / ATCC 24843) (Fission yeast), this protein is Sexual differentiation process protein isp4 (isp4).